The chain runs to 82 residues: Ice-structuring protein B (82 aa).

An N-terminal signal peptide occupies residues 1–23 (MALSLFTVGQLIFLFWTMRITEA). A propeptide spans 24–44 (RPDPAAKAAPAAAAVPAAAAP) (removed by a dipeptidylpeptidase). The residue at position 81 (R81) is an Arginine amide.

Belongs to the type-I AFP family. Amidated. In terms of tissue distribution, detected in liver (at protein level).

It localises to the secreted. It is found in the extracellular space. Contributes to protect fish blood from freezing at subzero sea water temperatures. Lowers the blood freezing point. Binds to nascent ice crystals and prevents further growth. This chain is Ice-structuring protein B, found in Pseudopleuronectes americanus (Winter flounder).